A 173-amino-acid polypeptide reads, in one-letter code: Zinc finger matrin-type protein 5 (173 aa).

The C3H1-type zinc-finger motif lies at 51-79; that stretch reads ERSKEVCRKFVQTGQCVFGTSCRFSHMSE. The interval 83–111 is disordered; sequence KMLEQKIDDEKRQKEDPDQDGSSERSVDE.

Component of the U11/U12 snRNPs that are part of the U12-type spliceosome.

It localises to the nucleus. The polypeptide is Zinc finger matrin-type protein 5 (zmat5) (Danio rerio (Zebrafish)).